Consider the following 32-residue polypeptide: Conotoxin sr7a (32 aa).

3 cysteine pairs are disulfide-bonded: Cys-1-Cys-17, Cys-8-Cys-21, and Cys-16-Cys-31. The residue at position 32 (Ser-32) is a Serine amide.

In terms of tissue distribution, expressed by the venom duct.

It is found in the secreted. Its function is as follows. Elicits hyperactivity when injected intracranially into mice and produces paralysis when injected into the pedal muscle of freshwater snails, Pomacea paludosa, but it has no apparent effect after intramuscular injection into the limpet Patella opea or the freshwater fish Lebistes reticulatus. The chain is Conotoxin sr7a from Conus spurius (Alphabet cone).